Consider the following 535-residue polypeptide: CTP synthase (535 aa).

The segment at 1-267 is amidoligase domain; the sequence is MTKYIFVTGG…DKLVCEHMKL (267 aa). Residue serine 13 participates in CTP binding. Residue serine 13 participates in UTP binding. 14–19 provides a ligand contact to ATP; the sequence is SLGKGI. Tyrosine 54 serves as a coordination point for L-glutamine. Aspartate 71 lines the ATP pocket. Aspartate 71 and glutamate 141 together coordinate Mg(2+). Residues 148–150, 188–193, and lysine 224 contribute to the CTP site; these read DIE and KTKPTQ. UTP contacts are provided by residues 188 to 193 and lysine 224; that span reads KTKPTQ. A Glutamine amidotransferase type-1 domain is found at 292 to 534; the sequence is TIGLVGKYVE…VGASLQASES (243 aa). Glycine 354 contacts L-glutamine. The Nucleophile; for glutamine hydrolysis role is filled by cysteine 381. L-glutamine is bound by residues 382-385, glutamate 405, and arginine 462; that span reads LGMQ. Active-site residues include histidine 507 and glutamate 509.

Belongs to the CTP synthase family. As to quaternary structure, homotetramer.

The catalysed reaction is UTP + L-glutamine + ATP + H2O = CTP + L-glutamate + ADP + phosphate + 2 H(+). It carries out the reaction L-glutamine + H2O = L-glutamate + NH4(+). It catalyses the reaction UTP + NH4(+) + ATP = CTP + ADP + phosphate + 2 H(+). Its pathway is pyrimidine metabolism; CTP biosynthesis via de novo pathway; CTP from UDP: step 2/2. Allosterically activated by GTP, when glutamine is the substrate; GTP has no effect on the reaction when ammonia is the substrate. The allosteric effector GTP functions by stabilizing the protein conformation that binds the tetrahedral intermediate(s) formed during glutamine hydrolysis. Inhibited by the product CTP, via allosteric rather than competitive inhibition. Catalyzes the ATP-dependent amination of UTP to CTP with either L-glutamine or ammonia as the source of nitrogen. Regulates intracellular CTP levels through interactions with the four ribonucleotide triphosphates. This is CTP synthase from Bacillus pumilus (strain SAFR-032).